Consider the following 229-residue polypeptide: Large ribosomal subunit protein uL1 (229 aa).

Belongs to the universal ribosomal protein uL1 family. In terms of assembly, part of the 50S ribosomal subunit.

Functionally, binds directly to 23S rRNA. The L1 stalk is quite mobile in the ribosome, and is involved in E site tRNA release. Protein L1 is also a translational repressor protein, it controls the translation of the L11 operon by binding to its mRNA. The chain is Large ribosomal subunit protein uL1 from Streptococcus pneumoniae (strain Taiwan19F-14).